The sequence spans 403 residues: Nodal homolog (403 aa).

The first 18 residues, 1–18 (MAFLTAVLCFGFACMVQG), serve as a signal peptide directing secretion. A propeptide spanning residues 19 to 278 (VPSWLESRIP…RMPGIRRHRR (260 aa)) is cleaved from the precursor. N-linked (GlcNAc...) asparagine glycosylation is found at N68, N133, and N169. Residues 195 to 220 (AERGSGMSSAEFLDSPGDSPQYNPHH) are disordered. 3 disulfide bridges follow: C303/C369, C332/C400, and C336/C402. N341 is a glycosylation site (N-linked (GlcNAc...) asparagine).

This sequence belongs to the TGF-beta family. As to quaternary structure, homodimer; disulfide-linked. Interacts with, and is inhibited by cer1 and gdf10/bmp3b.

The protein localises to the secreted. Functionally, cooperation and regulatory loops of multiple nodals are essential for mesendoderm patterning in early embryos. Essential for mesoderm formation and axial patterning during embryonic development. Activates the activin-like signaling pathway to induce dorsal and ventral mesoderm in animal cap ectoderm. In addition, also dorsalizes ventral marginal zone (VMZ) tissues during gastrulation. Acts in a downstream signaling cascade via cripto and cer1 to mediate cardiogenesis in embryonic mesoderm. Directs the orientation of the left-right axis by driving the left-specific gene cascade in the left lateral plate mesoderm. In Xenopus tropicalis (Western clawed frog), this protein is Nodal homolog.